Here is a 288-residue protein sequence, read N- to C-terminus: Orotidine 5'-phosphate decarboxylase (288 aa).

Lys97 acts as the Proton donor in catalysis.

Belongs to the OMP decarboxylase family. Type 2 subfamily.

It carries out the reaction orotidine 5'-phosphate + H(+) = UMP + CO2. It participates in pyrimidine metabolism; UMP biosynthesis via de novo pathway; UMP from orotate: step 2/2. In Clostridium tetani (strain Massachusetts / E88), this protein is Orotidine 5'-phosphate decarboxylase.